Consider the following 235-residue polypeptide: Fms-related tyrosine kinase 3 ligand (235 aa).

An N-terminal signal peptide occupies residues 1–26; that stretch reads MTVLAPAWSPTTYLLLLLLLSSGLSG. Over 27–184 the chain is Extracellular; that stretch reads TQDCSFQHSP…EATAPTAPQP (158 aa). 3 cysteine pairs are disulfide-bonded: Cys30-Cys111, Cys70-Cys153, and Cys119-Cys158. 2 N-linked (GlcNAc...) asparagine glycosylation sites follow: Asn126 and Asn149. A helical transmembrane segment spans residues 185-205; it reads PLLLLLLLPVGLLLLAAAWCL. At 206 to 235 the chain is on the cytoplasmic side; the sequence is HWQRTRRRTPRPGEQVPPVPSPQDLLLVEH. The segment at 213–235 is disordered; that stretch reads RTPRPGEQVPPVPSPQDLLLVEH.

In terms of assembly, homodimer (isoform 2).

The protein localises to the cell membrane. The protein resides in the secreted. Stimulates the proliferation of early hematopoietic cells by activating FLT3. Synergizes well with a number of other colony stimulating factors and interleukins. Required for the development of B cells, and dendritic cells (DCs). The polypeptide is Fms-related tyrosine kinase 3 ligand (FLT3LG) (Homo sapiens (Human)).